The primary structure comprises 252 residues: Transcriptional regulatory protein HptR (252 aa).

The Response regulatory domain maps to Lys3–Val118. At Asp55 the chain carries 4-aspartylphosphate. The HTH araC/xylS-type domain maps to Asn153–Gln250. DNA-binding regions (H-T-H motif) lie at residues Ser170–Val191 and His217–Leu240.

Post-translationally, phosphorylated by HptS.

It is found in the cytoplasm. Member of the two-component regulatory system HptS/HptR that regulates genes involved in hexose phosphate transport system in response to changes in extracellular phosphate sources. Activates uhpT expression to facilitate glucose-6-phosphate/G6P utilization by directly binding to its promoter. Antagonizes CcpA-dependent transcription of a subset of CcpA-regulated genes involved in antibiotic susceptibility. The sequence is that of Transcriptional regulatory protein HptR (hptR) from Staphylococcus aureus (strain Mu50 / ATCC 700699).